The sequence spans 712 residues: Polyribonucleotide nucleotidyltransferase (712 aa).

Mg(2+) contacts are provided by aspartate 485 and aspartate 491. Positions 552–615 (PRIHTIKINP…EAIRRIEAIT (64 aa)) constitute a KH domain. The S1 motif domain occupies 621-689 (NRIYEGKVVR…RQGRVRLSIK (69 aa)).

This sequence belongs to the polyribonucleotide nucleotidyltransferase family. Component of the RNA degradosome, which is a multiprotein complex involved in RNA processing and mRNA degradation. Requires Mg(2+) as cofactor.

The protein resides in the cytoplasm. The enzyme catalyses RNA(n+1) + phosphate = RNA(n) + a ribonucleoside 5'-diphosphate. Its function is as follows. Involved in mRNA degradation. Catalyzes the phosphorolysis of single-stranded polyribonucleotides processively in the 3'- to 5'-direction. The polypeptide is Polyribonucleotide nucleotidyltransferase (Aeromonas hydrophila subsp. hydrophila (strain ATCC 7966 / DSM 30187 / BCRC 13018 / CCUG 14551 / JCM 1027 / KCTC 2358 / NCIMB 9240 / NCTC 8049)).